Here is a 274-residue protein sequence, read N- to C-terminus: Formamidopyrimidine-DNA glycosylase (274 aa).

The active-site Schiff-base intermediate with DNA is Pro2. Glu3 (proton donor) is an active-site residue. Residue Lys59 is the Proton donor; for beta-elimination activity of the active site. Residues His93, Arg112, and Lys153 each coordinate DNA. The FPG-type zinc-finger motif lies at 238–272 (QVHTKFNKPCPNCGELIQKIKLGGRGTYFCKKCQQ). Catalysis depends on Arg262, which acts as the Proton donor; for delta-elimination activity.

It belongs to the FPG family. Monomer. The cofactor is Zn(2+).

The enzyme catalyses Hydrolysis of DNA containing ring-opened 7-methylguanine residues, releasing 2,6-diamino-4-hydroxy-5-(N-methyl)formamidopyrimidine.. The catalysed reaction is 2'-deoxyribonucleotide-(2'-deoxyribose 5'-phosphate)-2'-deoxyribonucleotide-DNA = a 3'-end 2'-deoxyribonucleotide-(2,3-dehydro-2,3-deoxyribose 5'-phosphate)-DNA + a 5'-end 5'-phospho-2'-deoxyribonucleoside-DNA + H(+). Its function is as follows. Involved in base excision repair of DNA damaged by oxidation or by mutagenic agents. Acts as a DNA glycosylase that recognizes and removes damaged bases. Has a preference for oxidized purines, such as 7,8-dihydro-8-oxoguanine (8-oxoG). Has AP (apurinic/apyrimidinic) lyase activity and introduces nicks in the DNA strand. Cleaves the DNA backbone by beta-delta elimination to generate a single-strand break at the site of the removed base with both 3'- and 5'-phosphates. The protein is Formamidopyrimidine-DNA glycosylase of Mycoplasma mobile (strain ATCC 43663 / 163K / NCTC 11711) (Mesomycoplasma mobile).